Consider the following 220-residue polypeptide: Sec-independent protein translocase protein TatB (220 aa).

The helical transmembrane segment at 1 to 21 (MFDIGFSELLLVLVIGLVVLG) threads the bilayer. The tract at residues 190-220 (VTKQQIDTIDSHGTDLSSAGPSRIHQPGGDQ) is disordered.

This sequence belongs to the TatB family. As to quaternary structure, the Tat system comprises two distinct complexes: a TatABC complex, containing multiple copies of TatA, TatB and TatC subunits, and a separate TatA complex, containing only TatA subunits. Substrates initially bind to the TatABC complex, which probably triggers association of the separate TatA complex to form the active translocon.

Its subcellular location is the cell inner membrane. Its function is as follows. Part of the twin-arginine translocation (Tat) system that transports large folded proteins containing a characteristic twin-arginine motif in their signal peptide across membranes. Together with TatC, TatB is part of a receptor directly interacting with Tat signal peptides. TatB may form an oligomeric binding site that transiently accommodates folded Tat precursor proteins before their translocation. This Yersinia pseudotuberculosis serotype I (strain IP32953) protein is Sec-independent protein translocase protein TatB.